Here is a 1332-residue protein sequence, read N- to C-terminus: Sister chromatid cohesion protein PDS5 homolog A (1332 aa).

Met-1 is modified (N-acetylmethionine). The HEAT repeat unit spans residues 392–428 (ALVNDQLLGFVRERTLDKRWRVRKEAMMGLAQLYKKY). Ser-1096 carries the phosphoserine modification. A disordered region spans residues 1138–1332 (GVLGTVNKPL…PAERQIDLQR (195 aa)). Lys-1145 is subject to N6-acetyllysine. Polar residues predominate over residues 1160 to 1173 (GTETGSNINANSEL). Ser-1174 and Ser-1194 each carry phosphoserine. Thr-1207 carries the post-translational modification Phosphothreonine. Lys-1210 is subject to N6-acetyllysine. A compositionally biased stretch (polar residues) spans 1222–1232 (SDQSTQGNISS). An N6-acetyllysine modification is found at Lys-1288. A Phosphoserine modification is found at Ser-1303. Positions 1316–1332 (DGAKKAVPAERQIDLQR) are enriched in basic and acidic residues.

The protein belongs to the PDS5 family. Interacts with the cohesin complex. Interacts with WAPL (via FGF motifs) or CDCA5 (via the FGF motif); the interaction is direct, cohesin-dependent and competitive. Interacts with SMC3. Interacts with TP63.

It localises to the nucleus. In terms of biological role, probable regulator of sister chromatid cohesion in mitosis which may stabilize cohesin complex association with chromatin. May couple sister chromatid cohesion during mitosis to DNA replication. Cohesion ensures that chromosome partitioning is accurate in both meiotic and mitotic cells and plays an important role in DNA repair. The chain is Sister chromatid cohesion protein PDS5 homolog A (Pds5a) from Mus musculus (Mouse).